Consider the following 165-residue polypeptide: Cyclic pyranopterin monophosphate synthase (165 aa).

Residues 76–78 (LCH) and 114–115 (ME) each bind substrate. The active site involves Asp129.

Belongs to the MoaC family. As to quaternary structure, homohexamer; trimer of dimers.

It catalyses the reaction (8S)-3',8-cyclo-7,8-dihydroguanosine 5'-triphosphate = cyclic pyranopterin phosphate + diphosphate. It participates in cofactor biosynthesis; molybdopterin biosynthesis. In terms of biological role, catalyzes the conversion of (8S)-3',8-cyclo-7,8-dihydroguanosine 5'-triphosphate to cyclic pyranopterin monophosphate (cPMP). This is Cyclic pyranopterin monophosphate synthase from Brucella canis (strain ATCC 23365 / NCTC 10854 / RM-666).